The following is a 23-amino-acid chain: Potassium channel toxin kappa-KTx 1.3 (23 aa).

Intrachain disulfides connect cysteine 4–cysteine 22 and cysteine 8–cysteine 18.

This sequence belongs to the short scorpion toxin superfamily. Potassium channel inhibitor kappa-KTx family. Kappa-KTx 1 subfamily. Monomer. Post-translationally, is not amidated. As to expression, expressed by the venom gland.

Its subcellular location is the secreted. Its function is as follows. Shows very weak blocking activity on voltage-gated potassium channels Kv10.1/KCNH1/EAG1 (6.2% inhibition by 40 uM of the toxin). Has no effect on the other voltage-gated potassium channels tested. The sequence is that of Potassium channel toxin kappa-KTx 1.3 from Heterometrus spinifer (Asia giant forest scorpion).